The following is a 139-amino-acid chain: Small ribosomal subunit protein uS9 (139 aa).

Belongs to the universal ribosomal protein uS9 family.

The polypeptide is Small ribosomal subunit protein uS9 (Coxiella burnetii (strain CbuG_Q212) (Coxiella burnetii (strain Q212))).